The following is a 160-amino-acid chain: D-aminoacyl-tRNA deacylase 2 (160 aa).

The Gly-transPro motif, allows the protein to recognize chirality of D-amino acids signature appears at 152–153 (GP).

The protein belongs to the DTD family. Homodimer.

The protein localises to the cytoplasm. It catalyses the reaction a D-aminoacyl-tRNA + H2O = a tRNA + a D-alpha-amino acid + H(+). The enzyme catalyses glycyl-tRNA(Ala) + H2O = tRNA(Ala) + glycine + H(+). The catalysed reaction is D-tyrosyl-tRNA(Tyr) + H2O = D-tyrosine + tRNA(Tyr). It carries out the reaction L-alanyl-tRNA(Thr) + H2O = tRNA(Thr) + L-alanine + H(+). In terms of biological role, deacylates mischarged D-aminoacyl-tRNAs. Also deacylates mischarged glycyl-tRNA(Ala), protecting cells against glycine mischarging by AlaRS. Probably acts by rejecting L-amino acids from its binding site rather than specific recognition of D-amino acids. Catalyzes the hydrolysis of D-tyrosyl-tRNA(Tyr), has no activity on correctly charged L-tyrosyl-tRNA(Tyr). By recycling D-aminoacyl-tRNA to D-amino acids and free tRNA molecules, this enzyme counteracts the toxicity associated with the formation of D-aminoacyl-tRNA entities in vivo and helps enforce protein L-homochirality. In contrast to DTD1, deacylates L-Ala mischarged on tRNA(Thr)(G4.U69) by alanine-tRNA ligase AARS. Can deacylate L-Ala due to a relaxed specificity for substrate chirality caused by the trans conformation of the Gly-Pro motif in the active site. Also hydrolyzes correctly charged, achiral, glycyl-tRNA(Gly) in vitro, although in vivo eef1a1a/EF-Tu may protect cognate achiral glycyl-tRNA(Gly) from DTD2-mediated deacetylation. This is D-aminoacyl-tRNA deacylase 2 (dtd2) from Danio rerio (Zebrafish).